The following is a 757-amino-acid chain: Zinc finger CCCH domain-containing protein 5 (757 aa).

The segment at 1 to 127 is disordered; the sequence is MEQANEKEEE…REEEERRWKD (127 aa). Residues 13–35 show a composition bias toward basic and acidic residues; that stretch reads HEEAAGEKESFEESKEKAAEMSR. Basic residues predominate over residues 36–50; sequence KEKRKAMKKLKRKQV. The span at 51-127 shows a compositional bias: basic and acidic residues; it reads RKEIAAKERE…REEEERRWKD (77 aa). The C3H1-type 1 zinc finger occupies 240-268; it reads EQDKAHCPFHLKTGACRFGQRCSRVHFYP. In terms of domain architecture, RRM spans 295–372; sequence YTDEEAELCY…KQVNCEFVNI (78 aa). A C3H1-type 2 zinc finger spans residues 374–404; sequence RWKVAICGEYMKSRLKTCSRGSACNFIHCFR. The tract at residues 441 to 757 is disordered; the sequence is HESSGSLNDS…EEEIERWRPV (317 aa). Positions 444–455 are enriched in polar residues; that stretch reads SGSLNDSISDLS. A compositionally biased stretch (basic and acidic residues) spans 487–546; the sequence is YHGDTQDSTREDKLRRHAENCHDGDDSPSRDGSLEREMYKERRYAKDTLHRDSRWSEHSP. 2 stretches are compositionally biased toward basic residues: residues 547 to 557 and 600 to 609; these read GHRVGRKRIHG and KTHRSSRKHS. 3 stretches are compositionally biased toward basic and acidic residues: residues 610 to 634, 644 to 672, and 681 to 721; these read REGSSADKEEGHEHDRVHTVSDKSH, RSSSRYSHEEDSTESRHHQHKESDKKRSV, and SDKD…ETHK. Residues 722 to 733 are compositionally biased toward basic residues; the sequence is ERRHRHRKRRRT.

This Arabidopsis thaliana (Mouse-ear cress) protein is Zinc finger CCCH domain-containing protein 5.